The following is a 115-amino-acid chain: NADH-ubiquinone oxidoreductase chain 3 (115 aa).

The next 3 membrane-spanning stretches (helical) occupy residues 3–23 (LMLV…IAFW), 55–75 (FFLV…LLPL), and 87–107 (VLIM…YEWI).

This sequence belongs to the complex I subunit 3 family. Core subunit of respiratory chain NADH dehydrogenase (Complex I) which is composed of 45 different subunits. Interacts with TMEM186. Interacts with TMEM242.

Its subcellular location is the mitochondrion inner membrane. The enzyme catalyses a ubiquinone + NADH + 5 H(+)(in) = a ubiquinol + NAD(+) + 4 H(+)(out). Its function is as follows. Core subunit of the mitochondrial membrane respiratory chain NADH dehydrogenase (Complex I) which catalyzes electron transfer from NADH through the respiratory chain, using ubiquinone as an electron acceptor. Essential for the catalytic activity of complex I. The polypeptide is NADH-ubiquinone oxidoreductase chain 3 (Oryctolagus cuniculus (Rabbit)).